Here is a 173-residue protein sequence, read N- to C-terminus: NADH-ubiquinone oxidoreductase chain 6 (173 aa).

The next 5 membrane-spanning stretches (helical) occupy residues methionine 1–serine 21, tyrosine 27–glycine 47, isoleucine 48–valine 68, valine 87–phenylalanine 107, and cysteine 139–leucine 159.

It belongs to the complex I subunit 6 family.

Its subcellular location is the mitochondrion membrane. The catalysed reaction is a ubiquinone + NADH + 5 H(+)(in) = a ubiquinol + NAD(+) + 4 H(+)(out). In terms of biological role, core subunit of the mitochondrial membrane respiratory chain NADH dehydrogenase (Complex I) that is believed to belong to the minimal assembly required for catalysis. Complex I functions in the transfer of electrons from NADH to the respiratory chain. The immediate electron acceptor for the enzyme is believed to be ubiquinone. The protein is NADH-ubiquinone oxidoreductase chain 6 (MT-ND6) of Alca torda (Razorbill).